A 471-amino-acid polypeptide reads, in one-letter code: POU domain protein 2 (471 aa).

Residues Cys-1–Ala-18 are compositionally biased toward acidic residues. Disordered regions lie at residues Cys-1 to Gln-32 and Asp-149 to Leu-238. Low complexity predominate over residues Ser-165–Pro-180. A compositionally biased stretch (polar residues) spans Glu-186–Asn-196. Residues Ser-197–Asn-230 show a composition bias toward low complexity. Residues Glu-257 to Asp-331 enclose the POU-specific domain. The homeobox DNA-binding region spans Arg-362–Asn-421.

The protein belongs to the POU transcription factor family. Class-2 subfamily.

It is found in the nucleus. DNA-binding regulatory protein implicated in early development. Involved in neuronal cell fate decision. May act as an octamer-dependent activator of transcription. The polypeptide is POU domain protein 2 (pdm2) (Drosophila virilis (Fruit fly)).